Here is a 119-residue protein sequence, read N- to C-terminus: Polyhedrin (119 aa).

Belongs to the polyhedrin family.

In terms of biological role, major component of the virus occlusion bodies, which are large proteinaceous structures (polyhedra), that protect the virus from the outside environment for extended periods until they are ingested by insect larvae. The chain is Polyhedrin (PH) from Antheraea pernyi nuclear polyhedrosis virus (ApNPV).